We begin with the raw amino-acid sequence, 801 residues long: H(+)/Cl(-) exchange transporter 3 (801 aa).

Topologically, residues 1–125 (MESEQLFHRG…WEMTKSLYDA (125 aa)) are cytoplasmic. Short sequence motifs (di-leucine internalization motif; mediates targeting to late endosome and lysosome membranes) lie at residues 28–29 (LL), 46–47 (LL), and 71–75 (LLDLL). A helical membrane pass occupies residues 126 to 163 (WSGWLVVTLTGLASGALAGLIDIAADWMTDLKEGICLS). A glycan (N-linked (GlcNAc...) asparagine) is linked at N177. Residues 209–232 (MNYIMYIFWALSFAFLAVSLVKVF) traverse the membrane as a helical segment. The short motif at 238-242 (GSGIP) is the Selectivity filter part_1 element. S239 provides a ligand contact to chloride. The helical intramembrane region spans 241-248 (IPEIKTIL). 2 helical membrane-spanning segments follow: residues 258 to 276 (GKWTLMIKTVTLVLAVASG) and 282 to 301 (EGPLVHVACCCGNIFSYLFP). A Selectivity filter part_2 motif is present at residues 280 to 284 (GKEGP). 2 consecutive intramembrane regions (helical) follow at residues 313–325 (VLSAASAAGVSVA) and 329–337 (PIGGVLFSL). 3 helical membrane passes run 349-367 (LWRSFFAALVAAFVLRSIN), 391-416 (FPFILLGVFGGLWGAFFIRANIAWCR), and 423-443 (FGKYPVLEVIIVAAITAVIAF). Residues N451 and N479 are each glycosylated (N-linked (GlcNAc...) asparagine). Residues 500-520 (IWQLCLALIFKIIMTVFTFGI) form a helical membrane-spanning segment. Residues 525-529 (GLFIP) carry the Selectivity filter part_3 motif. F527 provides a ligand contact to chloride. 2 consecutive intramembrane regions (helical) follow at residues 555-569 (GLYAMVGAAACLGGV) and 573-584 (TVSLVVIVFELT). An intramembrane region (note=Loop between two helices) is located at residues 585-588 (GGLE). Residues 589–607 (YIVPLMAAVMTSKWVGDAF) form a helical membrane-spanning segment. The Cytoplasmic portion of the chain corresponds to 608–801 (GREGIYEAHI…NQDPASIMFN (194 aa)). Y613 contacts chloride. 2 CBS domains span residues 641 to 705 (MRPR…ARKK) and 738 to 795 (LDMS…NQDP). ATP contacts are provided by residues 672–674 (YNG) and 779–782 (TKKD).

This sequence belongs to the chloride channel (TC 2.A.49) family. ClC-3/CLCN3 subfamily. Monomer and homodimer. Forms heterodimers with CLCN4. N-glycosylated.

The protein resides in the early endosome membrane. Its subcellular location is the late endosome membrane. It is found in the lysosome membrane. It localises to the cell membrane. Functionally, strongly outwardly rectifying, electrogenic H(+)/Cl(-)exchanger which mediates the exchange of chloride ions against protons. The CLC channel family contains both chloride channels and proton-coupled anion transporters that exchange chloride or another anion for protons. The presence of conserved gating glutamate residues is typical for family members that function as antiporters. This chain is H(+)/Cl(-) exchange transporter 3 (CLCN3), found in Pongo abelii (Sumatran orangutan).